We begin with the raw amino-acid sequence, 427 residues long: Chitin disaccharide deacetylase (427 aa).

A signal peptide spans 1–22; it reads MKLNKLAIATLVSAALSQYAFA. The NodB homology domain maps to 28 to 326; the sequence is GTIYLTFDDG…LAKQAGYVFD (299 aa). 2 Chitin-binding type-3 domains span residues 333–375 and 382–419; these read PNWQ…SSLW and TNWTQNVSYKQGDVVTYQGLRYLVNVPHVSQADWTPNS.

It belongs to the polysaccharide deacetylase family. Carbohydrate-binding module 12 subfamily.

The enzyme catalyses N,N'-diacetylchitobiose + H2O = N-acetyl-beta-D-glucosaminyl-(1-&gt;4)-D-glucosamine + acetate. It participates in glycan degradation; chitin degradation. Specifically catalyzes the degradation of N,N'-diacetylchitobiose. Key enzyme in the chitin catabolic cascade. The sequence is that of Chitin disaccharide deacetylase (deaA) from Vibrio alginolyticus.